We begin with the raw amino-acid sequence, 837 residues long: Protein translocase subunit SecA 1 (837 aa).

ATP is bound by residues glutamine 85, 103 to 107, and aspartate 492; that span reads GEGKT. Residues 791 to 837 form a disordered region; the sequence is KGEAINPAEGKPEAKRQPIRKDQHIGRNDPCPCGSGKKYKNCHGKEA. The segment covering 800–817 has biased composition (basic and acidic residues); that stretch reads GKPEAKRQPIRKDQHIGR. Zn(2+) contacts are provided by cysteine 821, cysteine 823, cysteine 832, and histidine 833. Positions 827-837 are enriched in basic residues; sequence KKYKNCHGKEA.

The protein belongs to the SecA family. As to quaternary structure, monomer and homodimer. Part of the essential Sec protein translocation apparatus which comprises SecA, SecYEG and auxiliary proteins SecDF. Other proteins may also be involved. The cofactor is Zn(2+).

It is found in the cell membrane. The protein resides in the cytoplasm. It catalyses the reaction ATP + H2O + cellular proteinSide 1 = ADP + phosphate + cellular proteinSide 2.. Functionally, part of the Sec protein translocase complex. Interacts with the SecYEG preprotein conducting channel. Has a central role in coupling the hydrolysis of ATP to the transfer of proteins into and across the cell membrane, serving as an ATP-driven molecular motor driving the stepwise translocation of polypeptide chains across the membrane. This Listeria monocytogenes serovar 1/2a (strain ATCC BAA-679 / EGD-e) protein is Protein translocase subunit SecA 1.